A 213-amino-acid chain; its full sequence is Putative manganese efflux pump MntP (213 aa).

6 helical membrane-spanning segments follow: residues 3-23, 36-56, 67-87, 130-150, 152-172, and 187-207; these read ILSIVLTGFGLAMDAFAVSVA, ALKVALFFGGFQALMPLIGWG, AFDHWIAFILLSFIGGKMIFE, LAIATSIDALAVGVSFAFLGI, IVQTIIIIGIITFVLCFLGVI, and IVGGVILILIGINILLEHTGI.

It belongs to the MntP (TC 9.B.29) family.

Its subcellular location is the cell membrane. Probably functions as a manganese efflux pump. This Clostridium perfringens (strain 13 / Type A) protein is Putative manganese efflux pump MntP.